The primary structure comprises 279 residues: Eukaryotic translation initiation factor 3 subunit G (279 aa).

Disordered regions lie at residues 69–90 (AKYG…QLGE) and 149–193 (LNGG…EARD). At Ser-77 the chain carries Phosphoserine. An RRM domain is found at 196–275 (TTLKVSQLNT…LILHLEWSKK (80 aa)).

This sequence belongs to the eIF-3 subunit G family. In terms of assembly, component of the eukaryotic translation initiation factor 3 (eIF-3) complex.

The protein resides in the cytoplasm. RNA-binding component of the eukaryotic translation initiation factor 3 (eIF-3) complex, which is involved in protein synthesis of a specialized repertoire of mRNAs and, together with other initiation factors, stimulates binding of mRNA and methionyl-tRNAi to the 40S ribosome. The eIF-3 complex specifically targets and initiates translation of a subset of mRNAs involved in cell proliferation. This subunit can bind 18S rRNA. The polypeptide is Eukaryotic translation initiation factor 3 subunit G (Lodderomyces elongisporus (strain ATCC 11503 / CBS 2605 / JCM 1781 / NBRC 1676 / NRRL YB-4239) (Yeast)).